The chain runs to 427 residues: Citrate synthase (427 aa).

Active-site residues include His-306 and Asp-363.

The protein belongs to the citrate synthase family. As to quaternary structure, homohexamer.

The catalysed reaction is oxaloacetate + acetyl-CoA + H2O = citrate + CoA + H(+). The protein operates within carbohydrate metabolism; tricarboxylic acid cycle; isocitrate from oxaloacetate: step 1/2. With respect to regulation, allosterically inhibited by NADH. In Salmonella typhimurium (strain LT2 / SGSC1412 / ATCC 700720), this protein is Citrate synthase (gltA).